The chain runs to 265 residues: Thiazole synthase (265 aa).

The Schiff-base intermediate with DXP role is filled by Lys-103. 1-deoxy-D-xylulose 5-phosphate is bound by residues Gly-164, 190-191 (AG), and 212-213 (NT).

The protein belongs to the ThiG family. In terms of assembly, homotetramer. Forms heterodimers with either ThiH or ThiS.

The protein resides in the cytoplasm. The enzyme catalyses [ThiS sulfur-carrier protein]-C-terminal-Gly-aminoethanethioate + 2-iminoacetate + 1-deoxy-D-xylulose 5-phosphate = [ThiS sulfur-carrier protein]-C-terminal Gly-Gly + 2-[(2R,5Z)-2-carboxy-4-methylthiazol-5(2H)-ylidene]ethyl phosphate + 2 H2O + H(+). The protein operates within cofactor biosynthesis; thiamine diphosphate biosynthesis. Functionally, catalyzes the rearrangement of 1-deoxy-D-xylulose 5-phosphate (DXP) to produce the thiazole phosphate moiety of thiamine. Sulfur is provided by the thiocarboxylate moiety of the carrier protein ThiS. In vitro, sulfur can be provided by H(2)S. This chain is Thiazole synthase, found in Bordetella avium (strain 197N).